Reading from the N-terminus, the 145-residue chain is Transmembrane protein 216 (145 aa).

4 helical membrane passes run 22–42, 56–76, 89–109, and 122–142; these read ILFFLNGWYNATYFLLELFIF, LVLDVVMLLLYLGIEVIRLFF, LSISVALTFPSAMMASYYLLL, and GILLFFCGSELLLEVLTLAAF.

Part of the tectonic-like complex (also named B9 complex). Interacts with TMEM107.

It is found in the membrane. The protein resides in the cytoplasm. It localises to the cytoskeleton. Its subcellular location is the cilium basal body. Part of the tectonic-like complex which is required for tissue-specific ciliogenesis and may regulate ciliary membrane composition. This is Transmembrane protein 216 (TMEM216) from Homo sapiens (Human).